Consider the following 553-residue polypeptide: Dihydroxy-acid dehydratase 1 (553 aa).

Asp78 serves as a coordination point for Mg(2+). Cys119 serves as a coordination point for [2Fe-2S] cluster. The Mg(2+) site is built by Asp120 and Lys121. An N6-carboxylysine modification is found at Lys121. Cys191 is a binding site for [2Fe-2S] cluster. Glu444 contacts Mg(2+). The active-site Proton acceptor is the Ser470.

The protein belongs to the IlvD/Edd family. In terms of assembly, homodimer. Requires [2Fe-2S] cluster as cofactor. It depends on Mg(2+) as a cofactor.

The catalysed reaction is (2R)-2,3-dihydroxy-3-methylbutanoate = 3-methyl-2-oxobutanoate + H2O. It carries out the reaction (2R,3R)-2,3-dihydroxy-3-methylpentanoate = (S)-3-methyl-2-oxopentanoate + H2O. It functions in the pathway amino-acid biosynthesis; L-isoleucine biosynthesis; L-isoleucine from 2-oxobutanoate: step 3/4. The protein operates within amino-acid biosynthesis; L-valine biosynthesis; L-valine from pyruvate: step 3/4. In terms of biological role, functions in the biosynthesis of branched-chain amino acids. Catalyzes the dehydration of (2R,3R)-2,3-dihydroxy-3-methylpentanoate (2,3-dihydroxy-3-methylvalerate) into 2-oxo-3-methylpentanoate (2-oxo-3-methylvalerate) and of (2R)-2,3-dihydroxy-3-methylbutanoate (2,3-dihydroxyisovalerate) into 2-oxo-3-methylbutanoate (2-oxoisovalerate), the penultimate precursor to L-isoleucine and L-valine, respectively. The chain is Dihydroxy-acid dehydratase 1 from Methanosarcina acetivorans (strain ATCC 35395 / DSM 2834 / JCM 12185 / C2A).